A 251-amino-acid chain; its full sequence is 1-(5-phosphoribosyl)-5-[(5-phosphoribosylamino)methylideneamino] imidazole-4-carboxamide isomerase (251 aa).

The active-site Proton acceptor is D8. The active-site Proton donor is the D131.

This sequence belongs to the HisA/HisF family.

It localises to the cytoplasm. The catalysed reaction is 1-(5-phospho-beta-D-ribosyl)-5-[(5-phospho-beta-D-ribosylamino)methylideneamino]imidazole-4-carboxamide = 5-[(5-phospho-1-deoxy-D-ribulos-1-ylimino)methylamino]-1-(5-phospho-beta-D-ribosyl)imidazole-4-carboxamide. The protein operates within amino-acid biosynthesis; L-histidine biosynthesis; L-histidine from 5-phospho-alpha-D-ribose 1-diphosphate: step 4/9. The chain is 1-(5-phosphoribosyl)-5-[(5-phosphoribosylamino)methylideneamino] imidazole-4-carboxamide isomerase from Burkholderia vietnamiensis (strain G4 / LMG 22486) (Burkholderia cepacia (strain R1808)).